The following is a 423-amino-acid chain: MNLRITSSEIIKPSSPTPQNLKSYRLSIVDQLTPNVYFSIILLYTKTTENPTKTSDHLKKSLSETLTRYYPLAGQLKYDQLIVDCNDQGVPFVEADVSNHMSELLKLPNIDVLEQLLPFKPHEGFNAERSNVTVQVNYFGCGGMAIGLCFKHKVLDATTAAFFVKNWGVIARGAGEIKDVIYDQASLFPARDLSFLSKSVDEEFLKAESETKRFVFDGSAIASMREKFTHLGRRPTRFEVVSAVILGALISAAKESEEPPERLDTIISVNLRQRMVPPFPEHCLGNIISGGLIYWPLEKKLDHGSLAEEIHQSIKKVDDQFARKFYGEAEFLNLPRLGANEVVKKREFWVTSWCKTPLHQSDFGWGKPKWAGNSMRLNEITVLFDTSDGEGIEAWVGLPKKDMARFEQDATIVAYTSPNPTIL.

Catalysis depends on proton acceptor residues H152 and D362.

Belongs to the plant acyltransferase family. In terms of assembly, monomer. Mainly expressed in petioles.

It catalyses the reaction isomeliandiol + acetyl-CoA = 21-O-acetyl-isomeliandiol + CoA. It participates in secondary metabolite biosynthesis; terpenoid biosynthesis. In terms of biological role, acetyltransferase involved in the biosynthesis of limonoids triterpene natural products such as azadirachtin, an antifeedant widely used as bioinsecticide, and possessing many medicinal applications including anti-tumoral, anti-malarial, anti-rheumatic, antibacterial, anti-inflammatory, anti-pyretic and diuretic effects. Catalyzes the formation of 21-O-acetyl-isomeliandiol from isomeliandiol. The chain is Limonoid 21-O-acetyltransferse from Melia azedarach (Chinaberry tree).